Here is a 161-residue protein sequence, read N- to C-terminus: Large ribosomal subunit protein uL11 (161 aa).

It belongs to the universal ribosomal protein uL11 family. As to quaternary structure, part of the ribosomal stalk of the 50S ribosomal subunit. Interacts with L10 and the large rRNA to form the base of the stalk. L10 forms an elongated spine to which L12 dimers bind in a sequential fashion forming a multimeric L10(L12)X complex.

In terms of biological role, forms part of the ribosomal stalk which helps the ribosome interact with GTP-bound translation factors. The polypeptide is Large ribosomal subunit protein uL11 (Methanosarcina acetivorans (strain ATCC 35395 / DSM 2834 / JCM 12185 / C2A)).